The following is a 236-amino-acid chain: 2-C-methyl-D-erythritol 4-phosphate cytidylyltransferase (236 aa).

It belongs to the IspD/TarI cytidylyltransferase family. IspD subfamily. As to quaternary structure, homodimer.

The enzyme catalyses 2-C-methyl-D-erythritol 4-phosphate + CTP + H(+) = 4-CDP-2-C-methyl-D-erythritol + diphosphate. It functions in the pathway isoprenoid biosynthesis; isopentenyl diphosphate biosynthesis via DXP pathway; isopentenyl diphosphate from 1-deoxy-D-xylulose 5-phosphate: step 2/6. Functionally, catalyzes the formation of 4-diphosphocytidyl-2-C-methyl-D-erythritol from CTP and 2-C-methyl-D-erythritol 4-phosphate (MEP). The protein is 2-C-methyl-D-erythritol 4-phosphate cytidylyltransferase of Escherichia fergusonii (strain ATCC 35469 / DSM 13698 / CCUG 18766 / IAM 14443 / JCM 21226 / LMG 7866 / NBRC 102419 / NCTC 12128 / CDC 0568-73).